We begin with the raw amino-acid sequence, 291 residues long: Transmembrane protein 41B (291 aa).

A disordered region spans residues 1–38 (MAKGRVAERSQMGADHTTPVGDGAAGTRGPAAPGSRDY). Phosphothreonine is present on T18. Residues 21 to 34 (GDGAAGTRGPAAPG) are compositionally biased toward low complexity. Residue S35 is modified to Phosphoserine. 6 helical membrane-spanning segments follow: residues 52 to 72 (MSLLILVSIFLSAAFVMFLVY), 109 to 129 (FYVQVLVAYFATYIFLQTFAI), 147 to 169 (LALFLVCLCSGLGASFCYMLSYL), 197 to 217 (LINYIIFLRITPFLPNWFINI), 225 to 245 (PLKVFFIGTFLGVAPPSFVAI), and 262 to 282 (SWNSIFILMILAVLSILPAIF). A VTT domain; required for its function in autophagy region spans residues 140-251 (GFLYPFPLAL…FVAIKAGTTL (112 aa)).

It belongs to the TMEM41 family. Interacts with VMP1. Interacts with COPA, COPB1, VDAC1 and ERLIN2. Interacts with ATG2A. Interacts with SURF4.

The protein resides in the endoplasmic reticulum membrane. Its subcellular location is the endomembrane system. The enzyme catalyses a 1,2-diacyl-sn-glycero-3-phospho-L-serine(in) = a 1,2-diacyl-sn-glycero-3-phospho-L-serine(out). The catalysed reaction is cholesterol(in) = cholesterol(out). It carries out the reaction a 1,2-diacyl-sn-glycero-3-phosphocholine(in) = a 1,2-diacyl-sn-glycero-3-phosphocholine(out). It catalyses the reaction a 1,2-diacyl-sn-glycero-3-phosphoethanolamine(in) = a 1,2-diacyl-sn-glycero-3-phosphoethanolamine(out). Phospholipid scramblase involved in lipid homeostasis and membrane dynamics processes. Has phospholipid scramblase activity toward cholesterol and phosphatidylserine, as well as phosphatidylethanolamine and phosphatidylcholine. Required for autophagosome formation: participates in early stages of autophagosome biogenesis at the endoplasmic reticulum (ER) membrane by reequilibrating the leaflets of the ER as lipids are extracted by ATG2 (ATG2A or ATG2B) to mediate autophagosome assembly. In addition to autophagy, involved in other processes in which phospholipid scramblase activity is required. Required for normal motor neuron development. The chain is Transmembrane protein 41B from Pongo abelii (Sumatran orangutan).